Reading from the N-terminus, the 160-residue chain is Monooxygenase AacuO (160 aa).

Belongs to the avfA family.

Its pathway is secondary metabolite biosynthesis. Monooxygenase; part of the gene cluster that mediates the biosynthesis of the tetrahydroxanthone dimer secalonic acid D. The pathway begins with the synthesis of atrochrysone thioester by the polyketide synthase AacuL. The atrochrysone carboxyl ACP thioesterase AacuM then breaks the thioester bond and releases the atrochrysone carboxylic acid from AacuL. Atrochrysone carboxylic acid is decarboxylated by the decarboxylase AacuI, and oxidized by the anthrone oxygenase AacuG to yield emodin. Emodin is then reduced to emodin hydroquinone by a yet unidentified oxidoreductase. A-ring reduction by the short chain dehydrogenase AacuN, dehydration by the scytalone dehydratase-like protein AacuK and probable spontaneous re-oxidation, results in overall deoxygenation to chrysophanol. Baeyer-Villiger oxidation by the Baeyer-Villiger monooxygenase (BVMO) AacuH then yields monodictyphenone. Monodictyphenone is transformed into compounds with the tetrahydroxanthone skeleton via methylesterification by the methyltransferase AacuQ, followed by the action of the flavin-dependent monooxygenase AacuC, the isomerase AacuP, and the short chain dehydrogenase/reductase AacuF or AacuD. AacuF and AacuD should accept the same compound as a substrate but perform the ketoreduction with a different stereoselectivity, thus yielding blennolides B and A, respectively. In the final step of the biosynthesis, the cytochrome P450 monooxygenase AacuE accepts blennolide B and/or blennolide A to conduct the dimerization reaction to furnish the tetrahydroxanthone dimers, secalonic acids D, B, and F. In Aspergillus aculeatus (strain ATCC 16872 / CBS 172.66 / WB 5094), this protein is Monooxygenase AacuO.